A 396-amino-acid polypeptide reads, in one-letter code: MAEVETFLFTSESVNEGHPDKLCDQISDAVLDACLAEDPDSKVACETCTKTNMVMVFGEITTKANVDYEKIVRDTCRGIGFVSNDVGLDADHCKVLVNIEQQSPDIAQGVHGHFTKRPEEIGAGDQGHMFGYATDETPEFMPLSHVLATKLGARLTEVRKNATCPWLRPDGKTQVTVEYHNDNGAMVPIRVHTVLISTQHDETVTNDEIAADLKEHVIKPVIPEQYLDENTIFHLNPSGRFVIGGPHGDAGLTGRKIIIDTYGGWGAHGGGAFSGKDPTKVDRSGAYIARQAAKSIVASGIARRCIVQVSYAIGVPEPLSVFVDTYGTGKIPDKEILEIVKENFDFRPGMIIINLDLKRGGSGRYLKTAAYGHFGRDGADFTWEVVKPLKWEKPSA.

Glutamate 12 contacts Mg(2+). Histidine 18 is a binding site for ATP. Glutamate 46 is a K(+) binding site. Glutamate 59 and glutamine 102 together coordinate L-methionine. ATP contacts are provided by residues 170-172 (DGK), 238-241 (SGRF), aspartate 249, 255-256 (RK), alanine 272, lysine 276, and lysine 280. Aspartate 249 is a binding site for L-methionine. Lysine 280 lines the L-methionine pocket.

It belongs to the AdoMet synthase family. Homotetramer. The cofactor is Mn(2+). It depends on Mg(2+) as a cofactor. Requires Co(2+) as cofactor. K(+) serves as cofactor.

The protein resides in the cytoplasm. It carries out the reaction L-methionine + ATP + H2O = S-adenosyl-L-methionine + phosphate + diphosphate. The protein operates within amino-acid biosynthesis; S-adenosyl-L-methionine biosynthesis; S-adenosyl-L-methionine from L-methionine: step 1/1. Catalyzes the formation of S-adenosylmethionine from methionine and ATP. The reaction comprises two steps that are both catalyzed by the same enzyme: formation of S-adenosylmethionine (AdoMet) and triphosphate, and subsequent hydrolysis of the triphosphate. The protein is S-adenosylmethionine synthase 4 (SAM4) of Hordeum vulgare (Barley).